The following is a 451-amino-acid chain: Tubulin alpha chain (451 aa).

Q11 contacts GTP. At K40 the chain carries N6-acetyllysine. Positions 71, 144, 145, 179, 206, and 228 each coordinate GTP. E71 is a Mg(2+) binding site. E254 is an active-site residue. The disordered stretch occupies residues 432–451 (YEEVGAESAEGDDEDEGEDY).

This sequence belongs to the tubulin family. In terms of assembly, dimer of alpha and beta chains. A typical microtubule is a hollow water-filled tube with an outer diameter of 25 nm and an inner diameter of 15 nM. Alpha-beta heterodimers associate head-to-tail to form protofilaments running lengthwise along the microtubule wall with the beta-tubulin subunit facing the microtubule plus end conferring a structural polarity. Microtubules usually have 13 protofilaments but different protofilament numbers can be found in some organisms and specialized cells. Requires Mg(2+) as cofactor. In terms of processing, undergoes a tyrosination/detyrosination cycle, the cyclic removal and re-addition of a C-terminal tyrosine residue by the enzymes tubulin tyrosine carboxypeptidase (TTCP) and tubulin tyrosine ligase (TTL), respectively. Post-translationally, acetylation of alpha chains at Lys-40 stabilizes microtubules and affects affinity and processivity of microtubule motors. This modification has a role in multiple cellular functions, ranging from cell motility, cell cycle progression or cell differentiation to intracellular trafficking and signaling.

It is found in the cytoplasm. Its subcellular location is the cytoskeleton. The catalysed reaction is GTP + H2O = GDP + phosphate + H(+). In terms of biological role, tubulin is the major constituent of microtubules, a cylinder consisting of laterally associated linear protofilaments composed of alpha- and beta-tubulin heterodimers. Microtubules grow by the addition of GTP-tubulin dimers to the microtubule end, where a stabilizing cap forms. Below the cap, tubulin dimers are in GDP-bound state, owing to GTPase activity of alpha-tubulin. The protein is Tubulin alpha chain (TBA) of Daucus carota (Wild carrot).